The sequence spans 129 residues: Small ribosomal subunit protein uS9 (129 aa).

The protein belongs to the universal ribosomal protein uS9 family.

In Helicobacter pylori (strain J99 / ATCC 700824) (Campylobacter pylori J99), this protein is Small ribosomal subunit protein uS9 (rpsI).